The chain runs to 196 residues: Protein GrpE (196 aa).

The disordered stretch occupies residues 1-24 (MAENERTTENFQPQDPSYAEAATT).

The protein belongs to the GrpE family. In terms of assembly, homodimer.

Its subcellular location is the cytoplasm. Functionally, participates actively in the response to hyperosmotic and heat shock by preventing the aggregation of stress-denatured proteins, in association with DnaK and GrpE. It is the nucleotide exchange factor for DnaK and may function as a thermosensor. Unfolded proteins bind initially to DnaJ; upon interaction with the DnaJ-bound protein, DnaK hydrolyzes its bound ATP, resulting in the formation of a stable complex. GrpE releases ADP from DnaK; ATP binding to DnaK triggers the release of the substrate protein, thus completing the reaction cycle. Several rounds of ATP-dependent interactions between DnaJ, DnaK and GrpE are required for fully efficient folding. The polypeptide is Protein GrpE (Gloeobacter violaceus (strain ATCC 29082 / PCC 7421)).